The sequence spans 763 residues: Phosphoglycerol transferase I (763 aa).

The next 4 helical transmembrane spans lie at 1–21 (MSEL…AWKA), 26–46 (WWFA…ITLF), 77–97 (ILPG…LGWI), and 108–128 (FGYS…SPAF).

Belongs to the OpgB family.

It localises to the cell inner membrane. The enzyme catalyses a phosphatidylglycerol + a membrane-derived-oligosaccharide D-glucose = a 1,2-diacyl-sn-glycerol + a membrane-derived-oligosaccharide 6-(glycerophospho)-D-glucose.. The protein operates within glycan metabolism; osmoregulated periplasmic glucan (OPG) biosynthesis. In terms of biological role, transfers a phosphoglycerol residue from phosphatidylglycerol to the membrane-bound nascent glucan backbones. In Escherichia coli O6:K15:H31 (strain 536 / UPEC), this protein is Phosphoglycerol transferase I.